The following is a 265-amino-acid chain: Ribosomal RNA small subunit methyltransferase A (265 aa).

S-adenosyl-L-methionine-binding residues include histidine 11, leucine 13, glycine 38, glutamate 59, aspartate 83, and asparagine 100.

This sequence belongs to the class I-like SAM-binding methyltransferase superfamily. rRNA adenine N(6)-methyltransferase family. RsmA subfamily.

Its subcellular location is the cytoplasm. It carries out the reaction adenosine(1518)/adenosine(1519) in 16S rRNA + 4 S-adenosyl-L-methionine = N(6)-dimethyladenosine(1518)/N(6)-dimethyladenosine(1519) in 16S rRNA + 4 S-adenosyl-L-homocysteine + 4 H(+). Its function is as follows. Specifically dimethylates two adjacent adenosines (A1518 and A1519) in the loop of a conserved hairpin near the 3'-end of 16S rRNA in the 30S particle. May play a critical role in biogenesis of 30S subunits. This Thermosynechococcus vestitus (strain NIES-2133 / IAM M-273 / BP-1) protein is Ribosomal RNA small subunit methyltransferase A.